Here is a 262-residue protein sequence, read N- to C-terminus: Taurine import ATP-binding protein TauB (262 aa).

An ABC transporter domain is found at 4–234 (VDHASVFFAA…RFAETGDARS (231 aa)). Position 39–46 (39–46 (GASGCGKS)) interacts with ATP.

The protein belongs to the ABC transporter superfamily. Taurine importer (TC 3.A.1.17.1) family. As to quaternary structure, the complex is composed of two ATP-binding proteins (TauB), two transmembrane proteins (TauC) and a solute-binding protein (TauA).

It is found in the cell inner membrane. It carries out the reaction taurine(out) + ATP + H2O = taurine(in) + ADP + phosphate + H(+). In terms of biological role, part of the ABC transporter complex TauABC involved in taurine import. Responsible for energy coupling to the transport system. The chain is Taurine import ATP-binding protein TauB from Rhizobium johnstonii (strain DSM 114642 / LMG 32736 / 3841) (Rhizobium leguminosarum bv. viciae).